The sequence spans 836 residues: MAGLNCGVSIALLGVLLLGAARLPRGAEAFEIALPRESNITVLIKLGTPTLLAKPCYIVISKRHITMLSIKSGERIVFTFSCQSPENHFVIEIQKNIDCMSGPCPFGEVQLQPSTSLLPTLNRTFIWDVKAHKSIGLELQFSIPRLRQIGPGESCPDGVTHSISGRIDATVVRIGTFCSNGTVSRIKMQEGVKMALHLPWFHPRNVSGFSIANRSSIKRLCIIESVFEGEGSATLMSANYPEGFPEDELMTWQFVVPAHLRASVSFLNFNLSNCERKEERVEYYIPGSTTNPEVFKLEDKQPGNMAGNFNLSLQGCDQDAQSPGILRLQFQVLVQHPQNESNKIYVVDLSNERAMSLTIEPRPVKQSRKFVPGCFVCLESRTCSSNLTLTSGSKHKISFLCDDLTRLWMNVEKTISCTDHRYCQRKSYSLQVPSDILHLPVELHDFSWKLLVPKDRLSLVLVPAQKLQQHTHEKPCNTSFSYLVASAIPSQDLYFGSFCPGGSIKQIQVKQNISVTLRTFAPSFQQEASRQGLTVSFIPYFKEEGVFTVTPDTKSKVYLRTPNWDRGLPSLTSVSWNISVPRDQVACLTFFKERSGVVCQTGRAFMIIQEQRTRAEEIFSLDEDVLPKPSFHHHSFWVNISNCSPTSGKQLDLLFSVTLTPRTVDLTVILIAAVGGGVLLLSALGLIICCVKKKKKKTNKGPAVGIYNDNINTEMPRQPKKFQKGRKDNDSHVYAVIEDTMVYGHLLQDSSGSFLQPEVDTYRPFQGTMGVCPPSPPTICSRAPTAKLATEEPPPRSPPESESEPYTFSHPNNGDVSSKDTDIPLLNTQEPMEPAE.

A signal peptide spans 1 to 29 (MAGLNCGVSIALLGVLLLGAARLPRGAEA). Residues 30-667 (FEIALPRESN…TLTPRTVDLT (638 aa)) lie on the Extracellular side of the membrane. 7 N-linked (GlcNAc...) asparagine glycosylation sites follow: N39, N122, N180, N205, N270, N310, and N386. The 128-residue stretch at 417–544 (CTDHRYCQRK…VSFIPYFKEE (128 aa)) folds into the CUB domain. C476 and C499 are joined by a disulfide. Residues 668–688 (VILIAAVGGGVLLLSALGLII) traverse the membrane as a helical segment. Residues 689–836 (CCVKKKKKKT…NTQEPMEPAE (148 aa)) lie on the Cytoplasmic side of the membrane. Phosphotyrosine is present on Y734. Positions 776–836 (PPTICSRAPT…NTQEPMEPAE (61 aa)) are disordered.

In terms of assembly, interacts with CDH2/N-cadherin, CDH3/P-cadherin, SDC1/syndecan-1, SDC4/syndecan-4 and the serine protease ST14/MT-SP1. Also interacts with SRC and PRKCG/protein kinase C gamma. Phosphorylated on tyrosine by kinases of the SRC family such as SRC and YES as well as by the protein kinase C gamma/PRKCG. Dephosphorylated by phosphotyrosine phosphatases. Also phosphorylated by suramin, a heparin analog. Tyrosine phosphorylated in response to dissociation of integrin alpha-6 beta-4 from laminin-5. In terms of processing, N-glycosylated. Post-translationally, a soluble form may also be produced by proteolytic cleavage at the cell surface (shedding). Another peptide of 80 kDa (p80) is present in cultured keratinocytes probably due to tryptic cleavage at an unidentified site on its N-terminal side. Converted to p80 by plasmin, a trypsin-like protease. As to expression, highly expressed in mitotic cells with low expression during interphase. Detected at highest levels in skeletal muscle and colon with lower levels in kidney, small intestine, placenta and lung. Up-regulated in a number of human tumor cell lines, as well as in colorectal cancer, breast carcinoma and lung cancer. Also expressed in cells with phenotypes reminiscent of mesenchymal stem cells and neural stem cells.

It is found in the cell membrane. Its subcellular location is the secreted. Its function is as follows. May be involved in cell adhesion and cell matrix association. May play a role in the regulation of anchorage versus migration or proliferation versus differentiation via its phosphorylation. May be a novel marker for leukemia diagnosis and for immature hematopoietic stem cell subsets. Belongs to the tetraspanin web involved in tumor progression and metastasis. The polypeptide is CUB domain-containing protein 1 (CDCP1) (Homo sapiens (Human)).